Reading from the N-terminus, the 280-residue chain is 2-dehydro-3-deoxyphosphooctonate aldolase 2 (280 aa).

This sequence belongs to the KdsA family.

The protein localises to the cytoplasm. The enzyme catalyses D-arabinose 5-phosphate + phosphoenolpyruvate + H2O = 3-deoxy-alpha-D-manno-2-octulosonate-8-phosphate + phosphate. Its pathway is carbohydrate biosynthesis; 3-deoxy-D-manno-octulosonate biosynthesis; 3-deoxy-D-manno-octulosonate from D-ribulose 5-phosphate: step 2/3. It participates in bacterial outer membrane biogenesis; lipopolysaccharide biosynthesis. This Pseudomonas putida (strain ATCC 47054 / DSM 6125 / CFBP 8728 / NCIMB 11950 / KT2440) protein is 2-dehydro-3-deoxyphosphooctonate aldolase 2 (kdsA2).